We begin with the raw amino-acid sequence, 180 residues long: MIKWTEQAEIKLPDDVQATMENNELKIKGKLGEASRIFRDNYVKAYIEGSSVKIATSKNNKYTKGIVGTWYSETKLLIEGVTKGFEYHMKIDFTHFPMRVSVRGDKLIVENFLGEKSPRSAKIVDGCKVSVKGDRITINGIDKRKIGETAANIERATYIRHFDARVFQDGIFLLKGEVNE.

It belongs to the universal ribosomal protein uL6 family. Part of the 50S ribosomal subunit.

In terms of biological role, this protein binds to the 23S rRNA, and is important in its secondary structure. It is located near the subunit interface in the base of the L7/L12 stalk, and near the tRNA binding site of the peptidyltransferase center. This is Large ribosomal subunit protein uL6 from Picrophilus torridus (strain ATCC 700027 / DSM 9790 / JCM 10055 / NBRC 100828 / KAW 2/3).